Consider the following 334-residue polypeptide: AA9 family lytic polysaccharide monooxygenase A (334 aa).

Residues 1-22 (MSPSFKSTAILGAVALAARVRA) form the signal peptide. Positions 23 and 108 each coordinate Cu(2+). Cystine bridges form between Cys-78/Cys-200 and Cys-119/Cys-123. N-linked (GlcNAc...) asparagine glycosylation occurs at Asn-160. His-186 and Gln-195 together coordinate O2. Tyr-197 serves as a coordination point for Cu(2+). Asn-208 carries N-linked (GlcNAc...) asparagine glycosylation. Positions 244-304 (GPALYTGGSS…PSPSLPVEIP (61 aa)) are disordered. A compositionally biased stretch (low complexity) spans 249 to 265 (TGGSSPSPNPPTSTQSP).

The protein belongs to the polysaccharide monooxygenase AA9 family. Requires Cu(2+) as cofactor.

It is found in the secreted. It catalyses the reaction [(1-&gt;4)-beta-D-glucosyl]n+m + reduced acceptor + O2 = 4-dehydro-beta-D-glucosyl-[(1-&gt;4)-beta-D-glucosyl]n-1 + [(1-&gt;4)-beta-D-glucosyl]m + acceptor + H2O.. Lytic polysaccharide monooxygenase (LPMO) that depolymerizes crystalline and amorphous polysaccharides via the oxidation of scissile alpha- or beta-(1-4)-glycosidic bonds, yielding C1 or C4 oxidation products. Catalysis by LPMOs requires the reduction of the active-site copper from Cu(II) to Cu(I) by a reducing agent and H(2)O(2) or O(2) as a cosubstrate. Active on hemicelluloses, including xylan, glucomannan, and xyloglucan. Shows clear activity on cellooligosaccharides, generating C4 oxidation products. Also displays activity on konjac glucomannan (KGM), a linear beta-1,4-linked mannan with randomly distributed glucosyl residues; as well as trace activity on lichenan, a linear beta-1,3-beta-1,4-glucan with a 1:2 ratio of beta-1,3 to beta-1,4 linkages. Has no activity on ivory nut mannan (INM), a linear beta-1,4-linked mannan without substitutions. The sequence is that of AA9 family lytic polysaccharide monooxygenase A from Malbranchea cinnamomea (Thermophilic fungus).